Here is a 192-residue protein sequence, read N- to C-terminus: Xanthine phosphoribosyltransferase (192 aa).

Positions 20 and 27 each coordinate xanthine. 5-phospho-alpha-D-ribose 1-diphosphate is bound at residue 128-132 (AHGEA). Position 156 (Lys156) interacts with xanthine.

The protein belongs to the purine/pyrimidine phosphoribosyltransferase family. Xpt subfamily. As to quaternary structure, homodimer.

It is found in the cytoplasm. The enzyme catalyses XMP + diphosphate = xanthine + 5-phospho-alpha-D-ribose 1-diphosphate. Its pathway is purine metabolism; XMP biosynthesis via salvage pathway; XMP from xanthine: step 1/1. Functionally, converts the preformed base xanthine, a product of nucleic acid breakdown, to xanthosine 5'-monophosphate (XMP), so it can be reused for RNA or DNA synthesis. This Lactobacillus gasseri (strain ATCC 33323 / DSM 20243 / BCRC 14619 / CIP 102991 / JCM 1131 / KCTC 3163 / NCIMB 11718 / NCTC 13722 / AM63) protein is Xanthine phosphoribosyltransferase.